Here is a 343-residue protein sequence, read N- to C-terminus: Phosphoribosylformylglycinamidine cyclo-ligase (343 aa).

Belongs to the AIR synthase family.

Its subcellular location is the cytoplasm. The enzyme catalyses 2-formamido-N(1)-(5-O-phospho-beta-D-ribosyl)acetamidine + ATP = 5-amino-1-(5-phospho-beta-D-ribosyl)imidazole + ADP + phosphate + H(+). It functions in the pathway purine metabolism; IMP biosynthesis via de novo pathway; 5-amino-1-(5-phospho-D-ribosyl)imidazole from N(2)-formyl-N(1)-(5-phospho-D-ribosyl)glycinamide: step 2/2. This is Phosphoribosylformylglycinamidine cyclo-ligase from Rippkaea orientalis (strain PCC 8801 / RF-1) (Cyanothece sp. (strain PCC 8801)).